A 242-amino-acid chain; its full sequence is Dehydration-responsive element-binding protein 1J (242 aa).

Positions 20 to 29 (SSATTAATAT) are enriched in low complexity. Positions 20–44 (SSATTAATATGPASPKRPAGRTKFQ) are disordered. The segment at residues 50–109 (VFRGVRRRGRAGRWVCEVRVPGSRGDRLWVGTFDTAEEAARAHDAAMLAMCGASASLNFT) is a DNA-binding region (AP2/ERF). Positions 143–184 (FQRRGSTAATATATSGDAASTAPPSSSPVLSPNDDNASSAST) are disordered. Residues 148–184 (STAATATATSGDAASTAPPSSSPVLSPNDDNASSAST) are compositionally biased toward low complexity.

The protein belongs to the AP2/ERF transcription factor family. ERF subfamily.

The protein localises to the nucleus. Transcriptional activator that binds specifically to the DNA sequence 5'-[AG]CCGAC-3'. Binding to the C-repeat/DRE element mediates high salinity- and dehydration-inducible transcription. This is Dehydration-responsive element-binding protein 1J (DREB1J) from Oryza sativa subsp. indica (Rice).